The sequence spans 570 residues: Phosphoglucomutase 1 (570 aa).

N-acetylserine is present on S2. R24 and S120 together coordinate alpha-D-glucose 1,6-bisphosphate. S120 acts as the Phosphoserine intermediate in catalysis. The Mg(2+) site is built by S120, D291, D293, and D295. At S120 the chain carries Phosphoserine. D295, R296, T360, E379, S381, and K392 together coordinate alpha-D-glucose 1,6-bisphosphate.

This sequence belongs to the phosphohexose mutase family. Monomer. The cofactor is Mg(2+).

Its subcellular location is the cytoplasm. It catalyses the reaction alpha-D-glucose 1-phosphate = alpha-D-glucose 6-phosphate. The catalysed reaction is O-phospho-L-seryl-[protein] + alpha-D-glucose 1-phosphate = alpha-D-glucose 1,6-bisphosphate + L-seryl-[protein]. The enzyme catalyses alpha-D-glucose 1,6-bisphosphate + L-seryl-[protein] = O-phospho-L-seryl-[protein] + alpha-D-glucose 6-phosphate. Minor phosphoglucomutase isozyme that catalyzes the reversible interconversion of alpha-D-glucose 1-phosphate and alpha-D-glucose 6-phosphate. The mechanism proceeds via the intermediate compound alpha-D-glucose 1,6-bisphosphate. Constitutes about 10-20% of the phosphoglucomutase activity in the cell. Key enzyme in hexose metabolism. The forward reaction is an essential step in the energy metabolism of galactose since the product of the galactose pathway enzymes in yeast is glucose 1-phosphate. The reverse reaction is an essential step for biosynthesis when carbon sources other than galactose are the energy source because glucose 1-phosphate is the starting point for the synthesis of UDP-glucose, which acts as a precursor for the synthesis of oligosaccharides and trehalose. This Saccharomyces cerevisiae (strain ATCC 204508 / S288c) (Baker's yeast) protein is Phosphoglucomutase 1.